A 435-amino-acid polypeptide reads, in one-letter code: Serine/threonine-protein kinase 40 (435 aa).

A Protein kinase domain is found at 35–332; that stretch reads FILGPRLGNS…EELDSLSSII (298 aa). ATP-binding positions include 41-49 and K66; that span reads LGNSPVPSI. D197 functions as the Proton acceptor in the catalytic mechanism.

Belongs to the protein kinase superfamily. CAMK Ser/Thr protein kinase family.

Its subcellular location is the nucleus. The protein localises to the cytoplasm. It catalyses the reaction L-seryl-[protein] + ATP = O-phospho-L-seryl-[protein] + ADP + H(+). The catalysed reaction is L-threonyl-[protein] + ATP = O-phospho-L-threonyl-[protein] + ADP + H(+). Functionally, may be a negative regulator of NF-kappa-B and p53-mediated gene transcription. The polypeptide is Serine/threonine-protein kinase 40 (STK40) (Gallus gallus (Chicken)).